Reading from the N-terminus, the 221-residue chain is UPF0758 protein KPN78578_39390 (221 aa).

In terms of domain architecture, MPN spans alanine 99–isoleucine 221. Residues histidine 170, histidine 172, and aspartate 183 each contribute to the Zn(2+) site. Residues histidine 170–aspartate 183 carry the JAMM motif motif.

It belongs to the UPF0758 family. YicR subfamily.

In Klebsiella pneumoniae subsp. pneumoniae (strain ATCC 700721 / MGH 78578), this protein is UPF0758 protein KPN78578_39390.